An 839-amino-acid polypeptide reads, in one-letter code: Probable alpha-glucuronidase A (839 aa).

The signal sequence occupies residues 1-18 (MRWSFLTVLLWLVSLTGA). N-linked (GlcNAc...) asparagine glycans are attached at residues asparagine 49, asparagine 101, asparagine 148, asparagine 221, asparagine 278, asparagine 309, asparagine 342, asparagine 464, asparagine 526, asparagine 575, asparagine 681, and asparagine 731.

Belongs to the glycosyl hydrolase 67 family.

The protein resides in the secreted. It catalyses the reaction an alpha-D-glucuronoside + H2O = D-glucuronate + an alcohol. Functionally, alpha-glucuronidase involved in the hydrolysis of xylan, a major structural heterogeneous polysaccharide found in plant biomass representing the second most abundant polysaccharide in the biosphere, after cellulose. Releases 4-O-methylglucuronic acid from xylan. This is Probable alpha-glucuronidase A (aguA) from Aspergillus flavus (strain ATCC 200026 / FGSC A1120 / IAM 13836 / NRRL 3357 / JCM 12722 / SRRC 167).